We begin with the raw amino-acid sequence, 463 residues long: GTPase Der (463 aa).

2 consecutive EngA-type G domains span residues 27–190 (PVVA…PEVG) and 200–373 (RRVA…ASWD). Residues 33–40 (GRPNVGKS), 80–84 (DTGGW), 142–145 (NKVD), 206–213 (GKPNVGKS), 253–257 (DTAGL), and 318–321 (NKWD) contribute to the GTP site. The region spanning 374–456 (TRIATGPLNT…PIRVNVRVRE (83 aa)) is the KH-like domain.

This sequence belongs to the TRAFAC class TrmE-Era-EngA-EngB-Septin-like GTPase superfamily. EngA (Der) GTPase family. Associates with the 50S ribosomal subunit.

Its function is as follows. GTPase that plays an essential role in the late steps of ribosome biogenesis. The polypeptide is GTPase Der (Mycobacterium bovis (strain ATCC BAA-935 / AF2122/97)).